The chain runs to 83 residues: MKTLLLTLVVVTMVCLDLGYTRRCFNQQSSQPKTTKSCPLGENSCYNKQWRDHRGSITERGCGCPKVKPGIKLRCCESEDCNN.

An N-terminal signal peptide occupies residues 1 to 21 (MKTLLLTLVVVTMVCLDLGYT). 4 disulfide bridges follow: Cys24/Cys45, Cys38/Cys62, Cys64/Cys75, and Cys76/Cys81.

The protein belongs to the three-finger toxin family. Short-chain subfamily. Type I alpha-neurotoxin sub-subfamily. As to expression, expressed by the venom gland.

It is found in the secreted. Its function is as follows. Binds to muscle nicotinic acetylcholine receptor (nAChR) and inhibit acetylcholine from binding to the receptor, thereby impairing neuromuscular transmission. The chain is Short neurotoxin NCA-02/NCA-05/UER-05 from Laticauda colubrina (Yellow-lipped sea krait).